Consider the following 284-residue polypeptide: MKQKVVSIGDINVANDLPFVLFGGMNVLESRDLAMRICEHYVTVTQKLGIPYVFKASFDKANRSSIHSYRGPGLEEGMKIFQELKQTFGVKIITDVHEPSQAQPVADVVDVIQLPAFLARQTDLVEAMAKTGAVINVKKPQFVSPGQMGNIVDKFKEGGNEKVILCDRGANFGYDNLVVDMLGFSIMKKVSGNSPVIFDVTHALQCRDPFGAASGGRRAQVTELARAGMAVGLAGLFIEAHPDPEHAKCDGPSALPLAKLEPFLKQMKAIDDLVKGFEELDTSK.

This sequence belongs to the KdsA family.

The protein localises to the cytoplasm. The catalysed reaction is D-arabinose 5-phosphate + phosphoenolpyruvate + H2O = 3-deoxy-alpha-D-manno-2-octulosonate-8-phosphate + phosphate. Its pathway is carbohydrate biosynthesis; 3-deoxy-D-manno-octulosonate biosynthesis; 3-deoxy-D-manno-octulosonate from D-ribulose 5-phosphate: step 2/3. The protein operates within bacterial outer membrane biogenesis; lipopolysaccharide biosynthesis. This chain is 2-dehydro-3-deoxyphosphooctonate aldolase, found in Escherichia coli O6:H1 (strain CFT073 / ATCC 700928 / UPEC).